Consider the following 190-residue polypeptide: dCTP deaminase (190 aa).

Residues 111-116, 135-137, glutamine 156, tyrosine 172, and glutamine 182 contribute to the dCTP site; these read KSTYAR and TLE. Catalysis depends on glutamate 137, which acts as the Proton donor/acceptor.

The protein belongs to the dCTP deaminase family. In terms of assembly, homotrimer.

It catalyses the reaction dCTP + H2O + H(+) = dUTP + NH4(+). Its pathway is pyrimidine metabolism; dUMP biosynthesis; dUMP from dCTP (dUTP route): step 1/2. Its function is as follows. Catalyzes the deamination of dCTP to dUTP. This is dCTP deaminase from Stenotrophomonas maltophilia (strain K279a).